The following is a 365-amino-acid chain: 2-aminoethylphosphonate--pyruvate transaminase (365 aa).

Residue Lys194 is modified to N6-(pyridoxal phosphate)lysine.

Belongs to the class-V pyridoxal-phosphate-dependent aminotransferase family. PhnW subfamily. In terms of assembly, homodimer. Requires pyridoxal 5'-phosphate as cofactor.

The catalysed reaction is (2-aminoethyl)phosphonate + pyruvate = phosphonoacetaldehyde + L-alanine. Functionally, involved in phosphonate degradation. The sequence is that of 2-aminoethylphosphonate--pyruvate transaminase from Bacillus cereus (strain AH187).